The chain runs to 589 residues: PTS system mannitol-specific EIICB component (589 aa).

The Cytoplasmic segment spans residues 1-25 (MERKSSLKVRVQKLGTSLSNMVMPN). Residues 14 to 347 (LGTSLSNMVM…ILKSDNSDDD (334 aa)) enclose the PTS EIIC type-2 domain. A helical membrane pass occupies residues 26-47 (IGAFIAWGVAASLFIATGYLPN). The Extracellular segment spans residues 48 to 51 (KALD). Residues 52–73 (TNVVGPMLKYVLPLLIGYTGGY) form a helical membrane-spanning segment. Residues 74-136 (NIHKQRGGVI…TGFEMLVNNF (63 aa)) are Cytoplasmic-facing. Residues 137 to 158 (SLGLIGFALMVLAFFVIGPVVA) form a helical membrane-spanning segment. At 159–167 (QLTEWVGIG) the chain is on the extracellular side. A helical transmembrane segment spans residues 168 to 188 (VEAIVKVHLLPLANLIIEPAK). The Cytoplasmic segment spans residues 189–275 (ILFLNNALNH…VMMKPAMFLA (87 aa)). A helical membrane pass occupies residues 276–295 (VIAGGLTGTFTFQTLGAGLT). Residues 296–317 (APASPGSIIAIMGMSPKGWGPH) lie on the Extracellular side of the membrane. The chain crosses the membrane as a helical span at residues 318–339 (LVVLAGVFAAAVASFLVASIIL). The Cytoplasmic segment spans residues 340 to 589 (KSDNSDDDSL…YDKLVARMHK (250 aa)). A PTS EIIB type-2 domain is found at 383-478 (HQIIFACDAG…SLTNGKASGS (96 aa)). Cys389 (phosphocysteine intermediate; for EIIB activity) is an active-site residue. The residue at position 389 (Cys389) is a Phosphocysteine; by EIIA.

Homodimer.

The protein localises to the cell membrane. It catalyses the reaction D-mannitol(out) + N(pros)-phospho-L-histidyl-[protein] = D-mannitol 1-phosphate(in) + L-histidyl-[protein]. Functionally, the phosphoenolpyruvate-dependent sugar phosphotransferase system (sugar PTS), a major carbohydrate active transport system, catalyzes the phosphorylation of incoming sugar substrates concomitantly with their translocation across the cell membrane. The enzyme II CmtAB PTS system is involved in D-mannitol transport. This Streptococcus mutans serotype c (strain ATCC 700610 / UA159) protein is PTS system mannitol-specific EIICB component.